Reading from the N-terminus, the 293-residue chain is Undecaprenyl-diphosphatase (293 aa).

A run of 7 helical transmembrane segments spans residues 3-23, 43-63, 85-105, 109-129, 203-223, 238-258, and 269-289; these read IALA…EFLP, KGKI…CWEF, LNVI…GKAI, LFNP…ILWA, VATE…TVYE, IFGI…RWLL, and FAWY…THLI.

The protein belongs to the UppP family.

It localises to the cell inner membrane. It catalyses the reaction di-trans,octa-cis-undecaprenyl diphosphate + H2O = di-trans,octa-cis-undecaprenyl phosphate + phosphate + H(+). Its function is as follows. Catalyzes the dephosphorylation of undecaprenyl diphosphate (UPP). Confers resistance to bacitracin. The sequence is that of Undecaprenyl-diphosphatase from Ralstonia nicotianae (strain ATCC BAA-1114 / GMI1000) (Ralstonia solanacearum).